The sequence spans 248 residues: Phosphatidylserine decarboxylase proenzyme (248 aa).

Ser206 (schiff-base intermediate with substrate; via pyruvic acid) is an active-site residue. Position 206 is a pyruvic acid (Ser); by autocatalysis (Ser206).

It belongs to the phosphatidylserine decarboxylase family. PSD-A subfamily. In terms of assembly, heterodimer of a large membrane-associated beta subunit and a small pyruvoyl-containing alpha subunit. Pyruvate serves as cofactor. Is synthesized initially as an inactive proenzyme. Formation of the active enzyme involves a self-maturation process in which the active site pyruvoyl group is generated from an internal serine residue via an autocatalytic post-translational modification. Two non-identical subunits are generated from the proenzyme in this reaction, and the pyruvate is formed at the N-terminus of the alpha chain, which is derived from the carboxyl end of the proenzyme. The post-translation cleavage follows an unusual pathway, termed non-hydrolytic serinolysis, in which the side chain hydroxyl group of the serine supplies its oxygen atom to form the C-terminus of the beta chain, while the remainder of the serine residue undergoes an oxidative deamination to produce ammonia and the pyruvoyl prosthetic group on the alpha chain.

The protein localises to the cell membrane. It catalyses the reaction a 1,2-diacyl-sn-glycero-3-phospho-L-serine + H(+) = a 1,2-diacyl-sn-glycero-3-phosphoethanolamine + CO2. Its pathway is phospholipid metabolism; phosphatidylethanolamine biosynthesis; phosphatidylethanolamine from CDP-diacylglycerol: step 2/2. Functionally, catalyzes the formation of phosphatidylethanolamine (PtdEtn) from phosphatidylserine (PtdSer). The chain is Phosphatidylserine decarboxylase proenzyme from Nitrobacter hamburgensis (strain DSM 10229 / NCIMB 13809 / X14).